The following is a 764-amino-acid chain: Protective antigen (764 aa).

Residues 1–29 (MKKRKVLIPLMALSTILVSSTGNLEVIQA) form the signal peptide. Positions 30–287 (EVKQENRLLN…PEARHPLVAA (258 aa)) are domain 1, calcium-binding; LF and EF binding sites. The PA14 domain occupies 43 to 179 (SSSQGLLGYY…NKKEVISSDN (137 aa)). The interval 176–214 (SSDNLQLPELKQKSSNSRKKRSTSAGPTVPDRDNDGIPD) is disordered. The Ca(2+) site is built by aspartate 206, aspartate 208, aspartate 210, isoleucine 212, and glutamate 217. An alpha-clamp region spans residues 231-239 (FLSPWISNI). Serine 251, lysine 254, and aspartate 264 together coordinate Ca(2+). Residues 288-516 (YPIVHVDMEN…SEVLPQIQET (229 aa)) form a domain 2, membrane insertion and heptamerization region. Residues 302-333 (KNEDQSTQNTDSQTRTISKNTSTSRTHTSEVH) are disordered. Residues 306–327 (QSTQNTDSQTRTISKNTSTSRT) show a composition bias toward polar residues. The next 2 beta stranded transmembrane spans lie at 331 to 342 (EVHGNAEVHASF) and 345 to 354 (IGGSVSAGFS). The interval 517–624 (TARIIFNGKD…KMNILIRDKR (108 aa)) is domain 3, heptamerization. The tract at residues 625 to 764 (FHYDRNNIAV…IFSKKGYEIG (140 aa)) is domain 4, binding to the receptor.

The protein belongs to the bacterial binary toxin family. Interacts with host ANTXR1 and ANTXR2. In terms of assembly, homooligomer; homooligomerizes to form homoheptamers (PA-63(7)) or homooctamers (PA-63(8)). PA-63(7) or PA-63(8) form ring-shaped oligomers that are in a pre-pore conformation, which do not penetrate the host membrane. PA-63(8) displays an enhanced stability, suggesting that this form circulates in the blood to reach and exert toxicity even in distant tissues. Interacts with lethal factor (LF) and edema factor (EF); can bind LF and EF simultaneously and interaction takes place following homooligomerization on the host cell membrane. PA-63(7) homoheptamer interacts with three molecules of LF to form the PA(7)LF(3) complex, in which the relative position of the N-terminal alpha-helices in the three LFs determines which factor is translocated first. In terms of processing, proteolytic activation by FURIN cleaves the protein in two parts, PA-20 and PA-63; the latter is the mature protein. The cleavage occurs at the cell surface and probably in the serum of infected animals as well; both native and cleaved PA are able to bind to the cell receptor. The release of PA-20 from the remaining receptor-bound PA-63 exposes the binding site for EF and LF, and promotes oligomerization and internalization of the protein.

The protein localises to the secreted. It is found in the host cell membrane. The protein resides in the host endosome membrane. Its function is as follows. Protective antigen constitutes one of the three proteins composing the anthrax toxin; it mediates attachment to host cells and translocation of edema factor (EF) and lethal factor (LF) into the host cytoplasm. PA associated with LF forms the lethal toxin (LeTx) and causes death when injected; PA associated with EF forms the edema toxin (EdTx) and produces edema. PA induces immunity to infection with anthrax. In terms of biological role, mediates the attachment to host cells by binding host cell receptors ANTXR1 and ANTXR2. Following host cell surface attachment, PA is cleaved by FURIN to generate the PA-63 (Protective antigen PA-63) form, which constitutes the mature form of the protein that oligomerizes and forms a pore to translocate the enzymatic toxin components edema factor (EF) and lethal factor (LF) into the host cytosol. Mature form that oligomerizes and forms a pore to translocate the enzymatic toxin components edema factor (EF) and lethal factor (LF) into the host cytosol. Following attachment to host cell receptors and cleavage by FURIN, homooligomerizes to form ring-shaped oligomers that are in a pre-pore conformation, and associates with EF and LF. Toxin-leaded complexes are then endocytosed in a clathrin-dependent process, followed by a conformational change of oligomerized PA-63 from the pre-pore to pore state, which is triggered by the low pH in the endosome. Once active, the pore mediates unfolding of EF and LF, which pass through the pore and translocate into the host cytosol. The sequence is that of Protective antigen (pagA) from Bacillus anthracis.